Reading from the N-terminus, the 639-residue chain is AP2-like ethylene-responsive transcription factor CRL5 (639 aa).

2 disordered regions span residues 25-59 and 258-277; these read PHMA…QQQH and GRKR…HHRK. The segment covering 43 to 59 has biased composition (low complexity); it reads QQQQQQQQQQHHQQQQH. 2 DNA-binding regions (AP2/ERF) span residues 288 to 351 and 387 to 445; these read QYRG…INFP and MYRG…TNFD. Low complexity predominate over residues 547–561; it reads QQQQQHMSMSAASSL. The tract at residues 547 to 579 is disordered; the sequence is QQQQQHMSMSAASSLVTSLSNSREGSPDRGGGL.

The protein belongs to the AP2/ERF transcription factor family. AP2 subfamily. In terms of tissue distribution, highly expressed at the base of the stem. Expressed in stems. Expressed a low levels in crown roots and seeds. Expressed in the stem region where adventitious (crown) root initiation occurs.

The protein localises to the nucleus. Its function is as follows. Acts as a positive regulator of adventitious (crown) root formation by promoting its initiation. Promotes adventitious root initiation through repression of cytokinin signaling by positively regulating the two-component response regulator RR1. Regulated by the auxin response factor and transcriptional activator ARF23/ARF1. The polypeptide is AP2-like ethylene-responsive transcription factor CRL5 (Oryza sativa subsp. japonica (Rice)).